The following is a 252-amino-acid chain: Carbohydrate deacetylase (252 aa).

2 residues coordinate Mg(2+): H59 and H122.

It belongs to the YdjC deacetylase family. As to quaternary structure, homodimer. Mg(2+) is required as a cofactor.

Functionally, probably catalyzes the deacetylation of acetylated carbohydrates an important step in the degradation of oligosaccharides. The polypeptide is Carbohydrate deacetylase (Vibrio vulnificus (strain YJ016)).